Reading from the N-terminus, the 98-residue chain is NADH-ubiquinone oxidoreductase chain 4L (98 aa).

The next 3 membrane-spanning stretches (helical) occupy residues 2-22 (PPIF…TLIF), 29-49 (SLLC…LIIL), and 61-81 (ILLL…LVMV).

Belongs to the complex I subunit 4L family. As to quaternary structure, core subunit of respiratory chain NADH dehydrogenase (Complex I) which is composed of 45 different subunits.

Its subcellular location is the mitochondrion inner membrane. The enzyme catalyses a ubiquinone + NADH + 5 H(+)(in) = a ubiquinol + NAD(+) + 4 H(+)(out). In terms of biological role, core subunit of the mitochondrial membrane respiratory chain NADH dehydrogenase (Complex I) which catalyzes electron transfer from NADH through the respiratory chain, using ubiquinone as an electron acceptor. Part of the enzyme membrane arm which is embedded in the lipid bilayer and involved in proton translocation. The chain is NADH-ubiquinone oxidoreductase chain 4L (MT-ND4L) from Avahi occidentalis (Western woolly lemur).